Here is a 229-residue protein sequence, read N- to C-terminus: 2,3-bisphosphoglycerate-dependent phosphoglycerate mutase (229 aa).

Residues 8–15, 21–22, R60, 87–90, K98, 114–115, and 183–184 each bind substrate; these read RHGESAWN, TG, ERHY, RR, and GN. The active-site Tele-phosphohistidine intermediate is the H9. E87 (proton donor/acceptor) is an active-site residue.

This sequence belongs to the phosphoglycerate mutase family. BPG-dependent PGAM subfamily. In terms of assembly, homodimer.

The catalysed reaction is (2R)-2-phosphoglycerate = (2R)-3-phosphoglycerate. It participates in carbohydrate degradation; glycolysis; pyruvate from D-glyceraldehyde 3-phosphate: step 3/5. Catalyzes the interconversion of 2-phosphoglycerate and 3-phosphoglycerate. The protein is 2,3-bisphosphoglycerate-dependent phosphoglycerate mutase of Polynucleobacter necessarius subsp. necessarius (strain STIR1).